We begin with the raw amino-acid sequence, 264 residues long: Thymidylate synthase (264 aa).

Arg-21 is a dUMP binding site. His-51 provides a ligand contact to (6R)-5,10-methylene-5,6,7,8-tetrahydrofolate. A dUMP-binding site is contributed by 126-127 (RR). Catalysis depends on Cys-146, which acts as the Nucleophile. DUMP is bound by residues 166 to 169 (RSAD), Asn-177, and 207 to 209 (HLY). Position 169 (Asp-169) interacts with (6R)-5,10-methylene-5,6,7,8-tetrahydrofolate. Ala-263 serves as a coordination point for (6R)-5,10-methylene-5,6,7,8-tetrahydrofolate.

The protein belongs to the thymidylate synthase family. Bacterial-type ThyA subfamily. Homodimer.

It is found in the cytoplasm. The catalysed reaction is dUMP + (6R)-5,10-methylene-5,6,7,8-tetrahydrofolate = 7,8-dihydrofolate + dTMP. It functions in the pathway pyrimidine metabolism; dTTP biosynthesis. Catalyzes the reductive methylation of 2'-deoxyuridine-5'-monophosphate (dUMP) to 2'-deoxythymidine-5'-monophosphate (dTMP) while utilizing 5,10-methylenetetrahydrofolate (mTHF) as the methyl donor and reductant in the reaction, yielding dihydrofolate (DHF) as a by-product. This enzymatic reaction provides an intracellular de novo source of dTMP, an essential precursor for DNA biosynthesis. This Azotobacter vinelandii (strain DJ / ATCC BAA-1303) protein is Thymidylate synthase.